The chain runs to 254 residues: 5'/3'-nucleotidase SurE (254 aa).

Positions 9, 10, 40, and 93 each coordinate a divalent metal cation.

The protein belongs to the SurE nucleotidase family. A divalent metal cation serves as cofactor.

Its subcellular location is the cytoplasm. It catalyses the reaction a ribonucleoside 5'-phosphate + H2O = a ribonucleoside + phosphate. It carries out the reaction a ribonucleoside 3'-phosphate + H2O = a ribonucleoside + phosphate. The enzyme catalyses [phosphate](n) + H2O = [phosphate](n-1) + phosphate + H(+). Its function is as follows. Nucleotidase with a broad substrate specificity as it can dephosphorylate various ribo- and deoxyribonucleoside 5'-monophosphates and ribonucleoside 3'-monophosphates with highest affinity to 3'-AMP. Also hydrolyzes polyphosphate (exopolyphosphatase activity) with the preference for short-chain-length substrates (P20-25). Might be involved in the regulation of dNTP and NTP pools, and in the turnover of 3'-mononucleotides produced by numerous intracellular RNases (T1, T2, and F) during the degradation of various RNAs. This Yersinia pestis bv. Antiqua (strain Antiqua) protein is 5'/3'-nucleotidase SurE.